A 484-amino-acid polypeptide reads, in one-letter code: Protein nucleotidyltransferase YdiU (484 aa).

The ATP site is built by G81, G83, R84, K103, D115, G116, R166, and R173. D244 (proton acceptor) is an active-site residue. Mg(2+)-binding residues include N245 and D254. ATP is bound at residue D254.

This sequence belongs to the SELO family. The cofactor is Mg(2+). Mn(2+) is required as a cofactor.

It carries out the reaction L-seryl-[protein] + ATP = 3-O-(5'-adenylyl)-L-seryl-[protein] + diphosphate. The catalysed reaction is L-threonyl-[protein] + ATP = 3-O-(5'-adenylyl)-L-threonyl-[protein] + diphosphate. It catalyses the reaction L-tyrosyl-[protein] + ATP = O-(5'-adenylyl)-L-tyrosyl-[protein] + diphosphate. The enzyme catalyses L-histidyl-[protein] + UTP = N(tele)-(5'-uridylyl)-L-histidyl-[protein] + diphosphate. It carries out the reaction L-seryl-[protein] + UTP = O-(5'-uridylyl)-L-seryl-[protein] + diphosphate. The catalysed reaction is L-tyrosyl-[protein] + UTP = O-(5'-uridylyl)-L-tyrosyl-[protein] + diphosphate. Its function is as follows. Nucleotidyltransferase involved in the post-translational modification of proteins. It can catalyze the addition of adenosine monophosphate (AMP) or uridine monophosphate (UMP) to a protein, resulting in modifications known as AMPylation and UMPylation. This Shewanella sp. (strain MR-4) protein is Protein nucleotidyltransferase YdiU.